A 71-amino-acid chain; its full sequence is Small ribosomal subunit protein bS21 (71 aa).

Residues 47-71 (RENATRAKRHAKRVARENARNTRLY) form a disordered region. Basic and acidic residues predominate over residues 60–71 (VARENARNTRLY).

This sequence belongs to the bacterial ribosomal protein bS21 family.

The protein is Small ribosomal subunit protein bS21 of Histophilus somni (strain 129Pt) (Haemophilus somnus).